A 236-amino-acid polypeptide reads, in one-letter code: MGTTLDVSRAELALVVMYLNKAEARDKLCRAIQYGSKFLSGGQPGTAQNVDKSTSLARKVFRLFKFVNDLHGLISPVPKGTPLPLVLLGKSKNALLSTFLFLDQIVWLGRSGIYKNKERAELLGRISLFCWMGSSVCTTLVEVGEMGRLSSSMKKIEKGLKNGNKYQDEDYRAKLKKSNERSLALIKSAMDIVVAAGLLQLAPTKITPRVTGAFGFITSIISCYQLLPTRPKIKTP.

N-acetylglycine is present on G2. Residues G2–K92 lie on the Cytoplasmic side of the membrane. Residues N93 to G109 traverse the membrane as a helical segment. Topologically, residues R110–T207 are lumenal. Residues P208 to L227 traverse the membrane as a helical segment. Over P228–P236 the chain is Cytoplasmic.

This sequence belongs to the peroxin-11 family. Homooligomer. Interacts with ARC5 and FIS1B on peroxisomes. Expressed in developing siliques.

The protein localises to the peroxisome membrane. In terms of biological role, involved in peroxisomal proliferation. Promotes peroxisomal duplication, aggregation or elongation without fission. In Arabidopsis thaliana (Mouse-ear cress), this protein is Peroxisomal membrane protein 11D (PEX11D).